A 487-amino-acid chain; its full sequence is Sorting nexin-4 (487 aa).

Positions 1 to 59 (MDHDDFDSVSWRHGPDSDISRPTTSGTDTAESPETRRDPNGKRRMSSASEIPQAGPHAD) are disordered. Positions 20 to 32 (SRPTTSGTDTAES) are enriched in polar residues. Positions 70–192 (VLECRVDTPI…IFLESPDWNA (123 aa)) constitute a PX domain. A 1,2-diacyl-sn-glycero-3-phospho-(1D-myo-inositol-3-phosphate)-binding residues include Arg113, Thr115, Lys139, and Arg158. The stretch at 395-430 (EQSRRERMRKLELRIDELTREVESAKTTSEMFDEEV) forms a coiled coil.

The protein belongs to the sorting nexin family.

Its subcellular location is the cytoplasm. It is found in the cytosol. The protein localises to the preautophagosomal structure membrane. It localises to the endosome membrane. Sorting nexin, involved in the separation or division of vacuoles throughout the entire life cycle of the cells. Involved in retrieval of late-Golgi SNAREs from post-Golgi endosomes to the trans-Golgi network, for cytoplasm to vacuole transport (Cvt), and autophagy of large cargos including mitophagy, pexophagy and glycophagy. In Emericella nidulans (strain FGSC A4 / ATCC 38163 / CBS 112.46 / NRRL 194 / M139) (Aspergillus nidulans), this protein is Sorting nexin-4 (snx4).